Consider the following 297-residue polypeptide: uncharacterized protein (297 aa).

Belongs to the glycosyltransferase 2 family.

This is an uncharacterized protein from Mycoplasma genitalium (strain ATCC 33530 / DSM 19775 / NCTC 10195 / G37) (Mycoplasmoides genitalium).